Consider the following 338-residue polypeptide: Methionine import ATP-binding protein MetN 1 (338 aa).

The 240-residue stretch at 2 to 241 (IELHQVSKSF…AKHATTKRFV (240 aa)) folds into the ABC transporter domain. 38 to 45 (GYSGAGKS) contributes to the ATP binding site.

Belongs to the ABC transporter superfamily. Methionine importer (TC 3.A.1.24) family. As to quaternary structure, the complex is composed of two ATP-binding proteins (MetN), two transmembrane proteins (MetI) and a solute-binding protein (MetQ).

It localises to the cell membrane. It carries out the reaction L-methionine(out) + ATP + H2O = L-methionine(in) + ADP + phosphate + H(+). It catalyses the reaction D-methionine(out) + ATP + H2O = D-methionine(in) + ADP + phosphate + H(+). Part of the ABC transporter complex MetNIQ involved in methionine import. Responsible for energy coupling to the transport system. The chain is Methionine import ATP-binding protein MetN 1 from Listeria monocytogenes serovar 1/2a (strain ATCC BAA-679 / EGD-e).